The chain runs to 160 residues: SsrA-binding protein (160 aa).

The segment covering 137-153 has biased composition (basic and acidic residues); the sequence is DKRDDIKTREWKQDKAR. Positions 137 to 160 are disordered; that stretch reads DKRDDIKTREWKQDKARIMKNANR.

The protein belongs to the SmpB family.

The protein localises to the cytoplasm. Its function is as follows. Required for rescue of stalled ribosomes mediated by trans-translation. Binds to transfer-messenger RNA (tmRNA), required for stable association of tmRNA with ribosomes. tmRNA and SmpB together mimic tRNA shape, replacing the anticodon stem-loop with SmpB. tmRNA is encoded by the ssrA gene; the 2 termini fold to resemble tRNA(Ala) and it encodes a 'tag peptide', a short internal open reading frame. During trans-translation Ala-aminoacylated tmRNA acts like a tRNA, entering the A-site of stalled ribosomes, displacing the stalled mRNA. The ribosome then switches to translate the ORF on the tmRNA; the nascent peptide is terminated with the 'tag peptide' encoded by the tmRNA and targeted for degradation. The ribosome is freed to recommence translation, which seems to be the essential function of trans-translation. In Edwardsiella ictaluri (strain 93-146), this protein is SsrA-binding protein.